Reading from the N-terminus, the 266-residue chain is Glucosamine-6-phosphate deaminase (266 aa).

Aspartate 72 acts as the Proton acceptor; for enolization step in catalysis. Aspartate 141 acts as the For ring-opening step in catalysis. The active-site Proton acceptor; for ring-opening step is the histidine 143. The active-site For ring-opening step is the glutamate 148.

Belongs to the glucosamine/galactosamine-6-phosphate isomerase family. NagB subfamily. As to quaternary structure, homohexamer.

It catalyses the reaction alpha-D-glucosamine 6-phosphate + H2O = beta-D-fructose 6-phosphate + NH4(+). Its pathway is amino-sugar metabolism; N-acetylneuraminate degradation; D-fructose 6-phosphate from N-acetylneuraminate: step 5/5. With respect to regulation, allosterically activated by N-acetylglucosamine 6-phosphate (GlcNAc6P). Functionally, catalyzes the reversible isomerization-deamination of glucosamine 6-phosphate (GlcN6P) to form fructose 6-phosphate (Fru6P) and ammonium ion. This is Glucosamine-6-phosphate deaminase from Aliivibrio salmonicida (strain LFI1238) (Vibrio salmonicida (strain LFI1238)).